Consider the following 310-residue polypeptide: Putative S-adenosyl-L-methionine-dependent methyltransferase MSMEG_1888/MSMEI_1848 (310 aa).

S-adenosyl-L-methionine is bound by residues Asp128 and 157 to 158 (DL).

This sequence belongs to the UPF0677 family.

In terms of biological role, exhibits S-adenosyl-L-methionine-dependent methyltransferase activity. The sequence is that of Putative S-adenosyl-L-methionine-dependent methyltransferase MSMEG_1888/MSMEI_1848 from Mycolicibacterium smegmatis (strain ATCC 700084 / mc(2)155) (Mycobacterium smegmatis).